The chain runs to 57 residues: uncharacterized protein (57 aa).

It localises to the plastid. This is an uncharacterized protein from Euglena longa (Euglenophycean alga).